The following is a 150-amino-acid chain: uncharacterized protein (150 aa).

4 consecutive transmembrane segments (helical) span residues 12–30 (IVQR…YFLF), 40–62 (RLLS…LVLF), 74–96 (IRRT…VLSG), and 106–128 (ALID…SRAV).

It is found in the cell membrane. This is an uncharacterized protein from Archaeoglobus fulgidus (strain ATCC 49558 / DSM 4304 / JCM 9628 / NBRC 100126 / VC-16).